Reading from the N-terminus, the 193-residue chain is Potassium-transporting ATPase KdpC subunit (193 aa).

Residues 14–34 (ITFTFLVLCGLVYPLIVTGIA) traverse the membrane as a helical segment.

It belongs to the KdpC family. The system is composed of three essential subunits: KdpA, KdpB and KdpC.

It is found in the cell membrane. Its function is as follows. Part of the high-affinity ATP-driven potassium transport (or Kdp) system, which catalyzes the hydrolysis of ATP coupled with the electrogenic transport of potassium into the cytoplasm. This subunit acts as a catalytic chaperone that increases the ATP-binding affinity of the ATP-hydrolyzing subunit KdpB by the formation of a transient KdpB/KdpC/ATP ternary complex. The chain is Potassium-transporting ATPase KdpC subunit from Bacillus anthracis (strain A0248).